We begin with the raw amino-acid sequence, 122 residues long: Large ribosomal subunit protein uL14 (122 aa).

Belongs to the universal ribosomal protein uL14 family. Part of the 50S ribosomal subunit. Forms a cluster with proteins L3 and L19. In the 70S ribosome, L14 and L19 interact and together make contacts with the 16S rRNA in bridges B5 and B8.

Functionally, binds to 23S rRNA. Forms part of two intersubunit bridges in the 70S ribosome. This chain is Large ribosomal subunit protein uL14, found in Orientia tsutsugamushi (strain Ikeda) (Rickettsia tsutsugamushi).